Consider the following 370-residue polypeptide: D-aspartate oxidase (370 aa).

Residues 1–18 (MPPRIIILGAGIIGLSTA) form the signal peptide. Ile13, Glu42, Ala63, Ser64, and Gly68 together coordinate FAD. Asn207 carries an N-linked (GlcNAc...) asparagine glycan. FAD-binding residues include Arg308, Gly338, and Tyr339.

Belongs to the DAMOX/DASOX family. As to quaternary structure, monomer. FAD is required as a cofactor.

The catalysed reaction is D-aspartate + O2 + H2O = oxaloacetate + H2O2 + NH4(+). The enzyme catalyses D-glutamate + O2 + H2O = H2O2 + 2-oxoglutarate + NH4(+). Selectively catalyzes the oxidative deamination of acidic amino acids. Protects the organism from the toxicity of D-amino acids. Enables the organism to utilize D-amino acids as a source of nutrients. This Talaromyces thermophilus protein is D-aspartate oxidase.